The primary structure comprises 329 residues: 4-hydroxythreonine-4-phosphate dehydrogenase (329 aa).

Substrate contacts are provided by His-136 and Thr-137. Residues His-166, His-211, and His-266 each coordinate a divalent metal cation. Lys-274, Asn-283, and Arg-292 together coordinate substrate.

It belongs to the PdxA family. In terms of assembly, homodimer. Zn(2+) serves as cofactor. Mg(2+) is required as a cofactor. Requires Co(2+) as cofactor.

It is found in the cytoplasm. The catalysed reaction is 4-(phosphooxy)-L-threonine + NAD(+) = 3-amino-2-oxopropyl phosphate + CO2 + NADH. The protein operates within cofactor biosynthesis; pyridoxine 5'-phosphate biosynthesis; pyridoxine 5'-phosphate from D-erythrose 4-phosphate: step 4/5. Functionally, catalyzes the NAD(P)-dependent oxidation of 4-(phosphooxy)-L-threonine (HTP) into 2-amino-3-oxo-4-(phosphooxy)butyric acid which spontaneously decarboxylates to form 3-amino-2-oxopropyl phosphate (AHAP). This is 4-hydroxythreonine-4-phosphate dehydrogenase from Escherichia coli O81 (strain ED1a).